We begin with the raw amino-acid sequence, 562 residues long: Arginine--tRNA ligase (562 aa).

The 'HIGH' region motif lies at 121-131; sequence PNIAKPMGMGH.

The protein belongs to the class-I aminoacyl-tRNA synthetase family. Monomer.

The protein localises to the cytoplasm. The catalysed reaction is tRNA(Arg) + L-arginine + ATP = L-arginyl-tRNA(Arg) + AMP + diphosphate. The protein is Arginine--tRNA ligase of Limosilactobacillus fermentum (strain NBRC 3956 / LMG 18251) (Lactobacillus fermentum).